The following is a 532-amino-acid chain: Tyrosinase (532 aa).

The first 22 residues, 1–22 (MESTTVLLAASTLLLVLHASYG), serve as a signal peptide directing secretion. The Lumenal, melanosome portion of the chain corresponds to 23-479 (QFPRACSTAQ…LEQARQIWQW (457 aa)). N-linked (GlcNAc...) asparagine glycans are attached at residues asparagine 90, asparagine 115, and asparagine 165. Cu cation-binding residues include histidine 184, histidine 206, and histidine 215. 2 N-linked (GlcNAc...) asparagine glycosylation sites follow: asparagine 234 and asparagine 341. Residues histidine 367 and histidine 371 each coordinate Cu cation. N-linked (GlcNAc...) asparagine glycosylation occurs at asparagine 375. Residue histidine 394 participates in Cu cation binding. A helical membrane pass occupies residues 480–500 (LLGAAVVGGLVTAVIATIISL). The Cytoplasmic portion of the chain corresponds to 501–532 (TCRRKRRTKTSEETRPLLMEAEDYHATYQSNL).

It belongs to the tyrosinase family. Active tyrosinase has been found as a homodimer and homotetramer. Requires Cu(2+) as cofactor. As to expression, frog skin.

It localises to the melanosome membrane. The catalysed reaction is 2 L-dopa + O2 = 2 L-dopaquinone + 2 H2O. It catalyses the reaction L-tyrosine + O2 = L-dopaquinone + H2O. Its activity is regulated as follows. Activated by trypsin, chymotrypsin and subtilisin. Activated by alpha-chymotrypsin, thermolysin and Pronase. Inhibited by its product L-DOPA and tyrosine. This is a copper-containing oxidase that functions in the formation of pigments such as melanins and other polyphenolic compounds. Catalyzes the initial and rate limiting step in the cascade of reactions leading to melanin production from tyrosine. In addition to hydroxylating tyrosine to DOPA (3,4-dihydroxyphenylalanine), also catalyzes the oxidation of DOPA to DOPA-quinone. This chain is Tyrosinase, found in Pelophylax lessonae (Pool frog).